We begin with the raw amino-acid sequence, 144 residues long: D-aminoacyl-tRNA deacylase (144 aa).

The short motif at 136 to 137 (GP) is the Gly-cisPro motif, important for rejection of L-amino acids element.

The protein belongs to the DTD family. Homodimer.

The protein resides in the cytoplasm. It catalyses the reaction glycyl-tRNA(Ala) + H2O = tRNA(Ala) + glycine + H(+). It carries out the reaction a D-aminoacyl-tRNA + H2O = a tRNA + a D-alpha-amino acid + H(+). Its function is as follows. An aminoacyl-tRNA editing enzyme that deacylates mischarged D-aminoacyl-tRNAs. Also deacylates mischarged glycyl-tRNA(Ala), protecting cells against glycine mischarging by AlaRS. Acts via tRNA-based rather than protein-based catalysis; rejects L-amino acids rather than detecting D-amino acids in the active site. By recycling D-aminoacyl-tRNA to D-amino acids and free tRNA molecules, this enzyme counteracts the toxicity associated with the formation of D-aminoacyl-tRNA entities in vivo and helps enforce protein L-homochirality. The protein is D-aminoacyl-tRNA deacylase of Corynebacterium glutamicum (strain R).